Consider the following 839-residue polypeptide: Autophagy-related protein 9A (839 aa).

A2 carries the N-acetylalanine modification. The Cytoplasmic segment spans residues 2-61 (AQFDTEYQRLEASYSDSPPGEEDLLVHVAEGSKSPWHHIENLDLFFSRVYNLHQKNGFTC). The short motif at 8 to 11 (YQRL) is the Tyrosine-based sorting signal element. Phosphoserine is present on residues S14, S16, and S18. The helical transmembrane segment at 62 to 84 (MLIGEMFELMQFLFVVAFTTFLV) threads the bilayer. Residues 85–128 (SCVDYDILFANKMVNHSLHPTEPVKVTLPDAFLPAQVCSARIQE) lie on the Lumenal side of the membrane. N99 is a glycosylation site (N-linked (GlcNAc...) asparagine). The chain crosses the membrane as a helical span at residues 129-154 (NGSLITILVIAGVFWIHRLIKFIYNI). Over 155–290 (CCYWEIHSFY…ELAQRLSNRI (136 aa)) the chain is Cytoplasmic. Residues 291-301 (LWIGIANFLLC) lie within the membrane without spanning it. The Cytoplasmic portion of the chain corresponds to 302–319 (PLILIWQILYAFFSYAEV). An intramembrane segment occupies 320 to 328 (LKREPGALG). Residues 329 to 371 (ARCWSLYGRCYLRHFNELEHELQSRLNRGYKPASKYMNCFLSP) lie on the Cytoplasmic side of the membrane. Residues 372 to 397 (LLTLLAKNGAFFAGSILAVLIALTIY) form a helical membrane-spanning segment. Residues 398-406 (DEDVLAVEH) lie on the Lumenal side of the membrane. The helical transmembrane segment at 407–424 (VLTTVTLLGVTVTVCRSF) threads the bilayer. Topologically, residues 425–470 (IPDQHMVFCPEQLLRVILAHIHYMPDHWQGNAHRSQTRDEFAQLFQ) are cytoplasmic. The stretch at 471–480 (YKAVFILEEL) is an intramembrane region. At 481–483 (LSP) the chain is on the cytoplasmic side. The stretch at 484–492 (IVTPLILIF) is an intramembrane region. At 493-839 (CLRPRALEII…DELPPQVHKV (347 aa)) the chain is on the cytoplasmic side. Residue S656 is modified to Phosphoserine. Disordered regions lie at residues 657-686 (PLQP…SSGS) and 717-839 (HKQQ…VHKV). Over residues 724–736 (EPERHVWHRRESD) the composition is skewed to basic and acidic residues. A phosphoserine mark is found at S735, S738, S741, and S828. Composition is skewed to acidic residues over residues 737 to 747 (ESGESAPEEGG) and 823 to 832 (VPEEGSEDEL).

Belongs to the ATG9 family. Homotrimer; forms a homotrimer with a central pore that forms a path between the two membrane leaflets. Interacts (via cytoplasmic its C-terminus) with ATG2A. Interacts with SUPT20H. Interacts (via the tyrosine-based sorting signal motif) with AP4M1; promoting association with the AP-4 complex. Interacts with ARFIP1 and ARFIP2. Interacts with ATG4A; the interaction is direct and promotes ATG9A trafficking. Ufmylated in a DDRGK1 dependent manner.

The protein resides in the preautophagosomal structure membrane. It is found in the cytoplasmic vesicle. Its subcellular location is the autophagosome membrane. The protein localises to the golgi apparatus. It localises to the trans-Golgi network membrane. The protein resides in the late endosome membrane. It is found in the recycling endosome membrane. Its subcellular location is the endoplasmic reticulum membrane. The protein localises to the mitochondrion membrane. The catalysed reaction is a 1,2-diacyl-sn-glycero-3-phosphocholine(in) = a 1,2-diacyl-sn-glycero-3-phosphocholine(out). It catalyses the reaction a 1,2-diacyl-sn-glycero-3-phospho-L-serine(in) = a 1,2-diacyl-sn-glycero-3-phospho-L-serine(out). The enzyme catalyses a 1,2-diacyl-sn-glycero-3-phosphoethanolamine(in) = a 1,2-diacyl-sn-glycero-3-phosphoethanolamine(out). Phospholipid scramblase involved in autophagy by mediating autophagosomal membrane expansion. Cycles between the preautophagosomal structure/phagophore assembly site (PAS) and the cytoplasmic vesicle pool and supplies membrane for the growing autophagosome. Lipid scramblase activity plays a key role in preautophagosomal structure/phagophore assembly by distributing the phospholipids that arrive through ATG2 (ATG2A or ATG2B) from the cytoplasmic to the luminal leaflet of the bilayer, thereby driving autophagosomal membrane expansion. Also required to supply phosphatidylinositol 4-phosphate to the autophagosome initiation site by recruiting the phosphatidylinositol 4-kinase beta (PI4KB) in a process dependent on ARFIP2, but not ARFIP1. In addition to autophagy, also plays a role in necrotic cell death. In Mus musculus (Mouse), this protein is Autophagy-related protein 9A.